A 207-amino-acid polypeptide reads, in one-letter code: Large ribosomal subunit protein uL4 (207 aa).

The interval His49–Ala75 is disordered.

Belongs to the universal ribosomal protein uL4 family. Part of the 50S ribosomal subunit.

Functionally, one of the primary rRNA binding proteins, this protein initially binds near the 5'-end of the 23S rRNA. It is important during the early stages of 50S assembly. It makes multiple contacts with different domains of the 23S rRNA in the assembled 50S subunit and ribosome. Forms part of the polypeptide exit tunnel. In Leuconostoc mesenteroides subsp. mesenteroides (strain ATCC 8293 / DSM 20343 / BCRC 11652 / CCM 1803 / JCM 6124 / NCDO 523 / NBRC 100496 / NCIMB 8023 / NCTC 12954 / NRRL B-1118 / 37Y), this protein is Large ribosomal subunit protein uL4.